We begin with the raw amino-acid sequence, 378 residues long: Carbamoyl phosphate synthase small chain (378 aa).

The segment at 1-189 (MTKPAILALA…DSHPEIAASE (189 aa)) is CPSase. L-glutamine-binding residues include Ser-47, Gly-241, and Gly-243. Positions 193–378 (HVVAYDYGVK…RFIDAMAKRR (186 aa)) constitute a Glutamine amidotransferase type-1 domain. Cys-269 (nucleophile) is an active-site residue. 5 residues coordinate L-glutamine: Leu-270, Gln-273, Asn-311, Gly-313, and Phe-314. Catalysis depends on residues His-353 and Glu-355.

Belongs to the CarA family. As to quaternary structure, composed of two chains; the small (or glutamine) chain promotes the hydrolysis of glutamine to ammonia, which is used by the large (or ammonia) chain to synthesize carbamoyl phosphate. Tetramer of heterodimers (alpha,beta)4.

It catalyses the reaction hydrogencarbonate + L-glutamine + 2 ATP + H2O = carbamoyl phosphate + L-glutamate + 2 ADP + phosphate + 2 H(+). It carries out the reaction L-glutamine + H2O = L-glutamate + NH4(+). It participates in amino-acid biosynthesis; L-arginine biosynthesis; carbamoyl phosphate from bicarbonate: step 1/1. Its pathway is pyrimidine metabolism; UMP biosynthesis via de novo pathway; (S)-dihydroorotate from bicarbonate: step 1/3. In terms of biological role, small subunit of the glutamine-dependent carbamoyl phosphate synthetase (CPSase). CPSase catalyzes the formation of carbamoyl phosphate from the ammonia moiety of glutamine, carbonate, and phosphate donated by ATP, constituting the first step of 2 biosynthetic pathways, one leading to arginine and/or urea and the other to pyrimidine nucleotides. The small subunit (glutamine amidotransferase) binds and cleaves glutamine to supply the large subunit with the substrate ammonia. This Pseudomonas syringae pv. tomato (strain ATCC BAA-871 / DC3000) protein is Carbamoyl phosphate synthase small chain.